The primary structure comprises 242 residues: Protein unc-119 homolog B-A (242 aa).

A compositionally biased stretch (basic and acidic residues) spans 1-20 (MSGSKREAALTGQPKDERKK). The disordered stretch occupies residues 1-49 (MSGSKREAALTGQPKDERKKSGGGVINRLKARRVQGKESGTSDQSSVTP). A compositionally biased stretch (polar residues) spans 38 to 48 (ESGTSDQSSVT). Y133 is a binding site for tetradecanoate.

This sequence belongs to the PDE6D/unc-119 family.

Its function is as follows. Myristoyl-binding protein that acts as a cargo adapter: specifically binds the myristoyl moiety of a subset of N-terminally myristoylated proteins and is required for their localization. Plays a key role in localization of proteins to the primary cilium membrane. The protein is Protein unc-119 homolog B-A (unc119b-a) of Xenopus laevis (African clawed frog).